The sequence spans 629 residues: tRNA uridine 5-carboxymethylaminomethyl modification enzyme MnmG (629 aa).

FAD-binding positions include Gly14–Gly19, Val126, and Ser181. Gly273–Phe287 is a binding site for NAD(+). Gln370 contacts FAD.

Belongs to the MnmG family. Homodimer. Heterotetramer of two MnmE and two MnmG subunits. Requires FAD as cofactor.

Its subcellular location is the cytoplasm. In terms of biological role, NAD-binding protein involved in the addition of a carboxymethylaminomethyl (cmnm) group at the wobble position (U34) of certain tRNAs, forming tRNA-cmnm(5)s(2)U34. The protein is tRNA uridine 5-carboxymethylaminomethyl modification enzyme MnmG of Geobacillus thermodenitrificans (strain NG80-2).